The sequence spans 944 residues: MARGWVRPSRVPLCARAVWTAAALLLWTPWTAGEVEDSEAIDTLGQPDGPDSPLPTLKGYFLNFLEPVNNITIVQGQTAILHCKVAGNPPPNVRWLKNDAPVVQEPRRVIIRKTEYGSRLRIQDLDTTDTGYYQCVATNGLKTITATGVLYVRLGPTHSPNHNFQDDDQEDGFCQPYRGIACARFIGNRTIYVDSLQMQGEIENRITAAFTMIGTSTQLSDQCSQFAIPSFCHFVFPLCDARSRAPKPRELCRDECEVLENDLCRQEYTIARSNPLILMRLQLPKCEALPMPESPDAANCMRIGIPAERLGRYHQCYNGSGADYRGMASTTKSGHQCQPWALQHPHSHRLSSTEFPELGGGHAYCRNPGGQVEGPWCFTQNKNVRVELCDVPPCSPRDGSKMGILYILVPSIAIPLVIACLFFLVCMCRNKQKASASTPQRRQLMASPSQDMEMPLISQHKQAKLKEISLSTVRFMEELGEDRFGKVYKGHLFGPAPGEPTQAVAIKTLKDKAEGPLREEFRQEAMLRARLQHPNIVCLLGVVTKDQPLSMIFSYCSHGDLHEFLVMRSPHSDVGSTDDDRTVKSALEPPDFVHVVAQIAAGMEFLSSHHVVHKDLATRNVLVYDKLNVRISDLGLFREVYSADYYKLMGNSLLPIRWMSPEAVMYGKFSIDSDIWSYGVVLWEVFSYGLQPYCGYSNQDVVEMIRSRQVLPCPDDCPAWVYALMIECWNEFPSRRPRFKDIHSRLRSWGNLSNYNSSAQTSGASNTTQTSSLSTSPVSNVSNARYMAPKQKAQPFPQPQFIPMKGQIRPLVPPAQLYIPVNGYQPVPAYGAYLPNFYPVQIPMQMAPQQVPPQMVPKPSSHHSGSGSTSTGYVTTAPSNTSVADRAALLSEGTEDAQNIAEDVAQSPVQEAEEEEEGSVPETELLGDNDTLQVTEAAHVQLEA.

The signal sequence occupies residues 1 to 33 (MARGWVRPSRVPLCARAVWTAAALLLWTPWTAG). Over 34 to 403 (EVEDSEAIDT…CSPRDGSKMG (370 aa)) the chain is Extracellular. The Ig-like C2-type domain maps to 55 to 145 (PTLKGYFLNF…VATNGLKTIT (91 aa)). Residue Asn-70 is glycosylated (N-linked (GlcNAc...) asparagine). Cystine bridges form between Cys-83–Cys-135, Cys-174–Cys-239, Cys-182–Cys-232, Cys-223–Cys-264, Cys-252–Cys-300, Cys-256–Cys-286, Cys-316–Cys-394, Cys-337–Cys-377, and Cys-365–Cys-389. The region spanning 169 to 303 (QEDGFCQPYR…SPDAANCMRI (135 aa)) is the FZ domain. Asn-188 carries N-linked (GlcNAc...) asparagine glycosylation. The Kringle domain maps to 316 to 394 (CYNGSGADYR…RVELCDVPPC (79 aa)). Asn-318 is a glycosylation site (N-linked (GlcNAc...) asparagine). The chain crosses the membrane as a helical span at residues 404–424 (ILYILVPSIAIPLVIACLFFL). The Cytoplasmic segment spans residues 425-944 (VCMCRNKQKA…TEAAHVQLEA (520 aa)). The Protein kinase domain occupies 473-746 (VRFMEELGED…PRFKDIHSRL (274 aa)). ATP contacts are provided by residues 479–487 (LGEDRFGKV) and Lys-507. Asp-615 serves as the catalytic Proton acceptor. Phosphotyrosine; by autocatalysis is present on Tyr-646. Positions 757-779 (SSAQTSGASNTTQTSSLSTSPVS) are disordered. The segment covering 765–779 (SNTTQTSSLSTSPVS) has biased composition (low complexity). Asymmetric dimethylarginine is present on Arg-785. Disordered stretches follow at residues 850 to 879 (QVPP…TAPS) and 898 to 929 (QNIA…LGDN). A compositionally biased stretch (low complexity) spans 857 to 872 (PKPSSHHSGSGSTSTG).

This sequence belongs to the protein kinase superfamily. Tyr protein kinase family. ROR subfamily. Homodimer; promotes osteogenesis. Binds YWHAB. Interacts with WTIP. Interacts with ROR2. Requires Mg(2+) as cofactor.

The protein localises to the cell membrane. It catalyses the reaction L-tyrosyl-[protein] + ATP = O-phospho-L-tyrosyl-[protein] + ADP + H(+). Functionally, tyrosine-protein kinase receptor which may be involved in the early formation of the chondrocytes. It seems to be required for cartilage and growth plate development. Phosphorylates YWHAB, leading to induction of osteogenesis and bone formation. In contrast, has also been shown to have very little tyrosine kinase activity in vitro. May act as a receptor for wnt ligand WNT5A which may result in the inhibition of WNT3A-mediated signaling. In Mus musculus (Mouse), this protein is Tyrosine-protein kinase transmembrane receptor ROR2 (Ror2).